Here is a 200-residue protein sequence, read N- to C-terminus: Pyridoxal 5'-phosphate synthase subunit PdxT (200 aa).

Residue 50 to 52 (GES) coordinates L-glutamine. The Nucleophile role is filled by C82. Residues R110 and 138–139 (IR) contribute to the L-glutamine site. Catalysis depends on charge relay system residues H174 and E176.

This sequence belongs to the glutaminase PdxT/SNO family. In the presence of PdxS, forms a dodecamer of heterodimers. Only shows activity in the heterodimer.

The catalysed reaction is aldehydo-D-ribose 5-phosphate + D-glyceraldehyde 3-phosphate + L-glutamine = pyridoxal 5'-phosphate + L-glutamate + phosphate + 3 H2O + H(+). It carries out the reaction L-glutamine + H2O = L-glutamate + NH4(+). Its pathway is cofactor biosynthesis; pyridoxal 5'-phosphate biosynthesis. Catalyzes the hydrolysis of glutamine to glutamate and ammonia as part of the biosynthesis of pyridoxal 5'-phosphate. The resulting ammonia molecule is channeled to the active site of PdxS. In Oceanobacillus iheyensis (strain DSM 14371 / CIP 107618 / JCM 11309 / KCTC 3954 / HTE831), this protein is Pyridoxal 5'-phosphate synthase subunit PdxT.